The chain runs to 409 residues: F-box protein At3g17320 (409 aa).

The region spanning Met1–Leu47 is the F-box domain.

In Arabidopsis thaliana (Mouse-ear cress), this protein is F-box protein At3g17320.